Reading from the N-terminus, the 368-residue chain is MTKAIIPQPRPGIMEISPYVGGESKLAGVDRIIKLSSNEGALGASPRVRDALIASAGEAHRYPDGNATALREALGRTHGLDPARIVCGAGSDELIGLLCRAYAGPGDSIVQSAYGFLMYGIYARGVGAEPILAPESDLTADIDAMLAAVRDTTKLVFLANPNNPTGTCLPTSEVVRLREGLRDDIILVVDAAYAEYVERNDYDAGARLVDSHPNTVMLRTFSKIGLGGLRLGWSYGPAHIIDVLNRVRGPFNICGQALVAGEAALADPAFTDLSRAHNSLWREWTRAKLQAMGIRVGESSGNFVLATFDAEGPFTALAADAALRQQGIICRRVAGYGLPNCLRITIGRDDEMQAVVEALGAFMAGEGR.

The residue at position 223 (K223) is an N6-(pyridoxal phosphate)lysine.

This sequence belongs to the class-II pyridoxal-phosphate-dependent aminotransferase family. Histidinol-phosphate aminotransferase subfamily. As to quaternary structure, homodimer. Pyridoxal 5'-phosphate serves as cofactor.

The enzyme catalyses L-histidinol phosphate + 2-oxoglutarate = 3-(imidazol-4-yl)-2-oxopropyl phosphate + L-glutamate. The protein operates within amino-acid biosynthesis; L-histidine biosynthesis; L-histidine from 5-phospho-alpha-D-ribose 1-diphosphate: step 7/9. In Rhodospirillum rubrum (strain ATCC 11170 / ATH 1.1.1 / DSM 467 / LMG 4362 / NCIMB 8255 / S1), this protein is Histidinol-phosphate aminotransferase.